Consider the following 512-residue polypeptide: NAD(P)H-quinone oxidoreductase chain 4, chloroplastic (512 aa).

Transmembrane regions (helical) follow at residues 4-24 (LPWLTIIVLFPILAGLLIPFI), 34-54 (WYALGVGILDFLLITYIFGYH), 87-107 (MPLVLLTGFVTTLAILGAWPV), 111-131 (AKLFYFLMLAMYSGQIGVFVS), 134-154 (LLLFFFMWELELIPVYLLLLV), 167-187 (FILYTAIGSIFILLAGLTMAF), 210-230 (ILLYIGFLIAYAVKLPAFPLH), 241-261 (HYSTCMLLAGILLKMGGYALI), 273-293 (LIFAPFLIIIGVINIIYAALT), 312-332 (MGFVLIGIGSLTNLGLSGAVL), 333-353 (QMISHGLIGASLFFLAGTTYD), 373-395 (TFAMFTTCSLASLALPGMSGFVA), 416-436 (IITFLEGIGIILTPIYLLSML), and 462-482 (IFVITCLVLPILGIGIYPKMA).

Belongs to the complex I subunit 4 family.

Its subcellular location is the plastid. The protein resides in the chloroplast thylakoid membrane. It catalyses the reaction a plastoquinone + NADH + (n+1) H(+)(in) = a plastoquinol + NAD(+) + n H(+)(out). The catalysed reaction is a plastoquinone + NADPH + (n+1) H(+)(in) = a plastoquinol + NADP(+) + n H(+)(out). In Chlorokybus atmophyticus (Soil alga), this protein is NAD(P)H-quinone oxidoreductase chain 4, chloroplastic.